Reading from the N-terminus, the 346-residue chain is Sensor histidine kinase GraS (346 aa).

2 helical membrane passes run 15-35 (MNWIFWILFLNLLMLGISLID) and 43-63 (LFYIVSLNLSLTMIFLILTYF). The Histidine kinase domain maps to 126 to 332 (EFVHDIKTPV…TVRLIFPLQN (207 aa)).

As to quaternary structure, interacts with GraX.

The protein resides in the cell membrane. The enzyme catalyses ATP + protein L-histidine = ADP + protein N-phospho-L-histidine.. Its function is as follows. Member of the two-component regulatory system GraR/GraS involved in resistance against cationic antimicrobial peptides (CAMPs). Functions as a sensor protein kinase which phosphorylates GraR through the auxiliary protein GraX. In turn, GraR up-regulates many genes such as adhesins, exoproteins, transporters, toxins, and proteins involved in cell wall synthesis. Down-regulates the expression of many genes involved in RNA and amino acid synthesis or glycolysis. This chain is Sensor histidine kinase GraS (graS), found in Staphylococcus aureus (strain Mu50 / ATCC 700699).